The chain runs to 129 residues: Biogenesis of lysosome-related organelles complex 1 subunit CNL1 (129 aa).

The protein belongs to the BLOC1S4 family. As to quaternary structure, component of the biogenesis of lysosome-related organelles complex-1 (BLOC-1).

The protein resides in the cytoplasm. In terms of biological role, component of the biogenesis of lysosome-related organelles complex-1 (BLOC-1), a complex that is involved in endosomal cargo sorting. The polypeptide is Biogenesis of lysosome-related organelles complex 1 subunit CNL1 (CLN1) (Eremothecium gossypii (strain ATCC 10895 / CBS 109.51 / FGSC 9923 / NRRL Y-1056) (Yeast)).